A 99-amino-acid chain; its full sequence is ATP synthase subunit c (99 aa).

The next 2 membrane-spanning stretches (helical) occupy residues 23 to 43 and 78 to 98; these read GAGIGYGLVAVGAGLAMIGAL and MGIAETAAIYSLIIAILLIFV.

Belongs to the ATPase C chain family. F-type ATPases have 2 components, F(1) - the catalytic core - and F(0) - the membrane proton channel. F(1) has five subunits: alpha(3), beta(3), gamma(1), delta(1), epsilon(1). F(0) has three main subunits: a(1), b(2) and c(10-14). The alpha and beta chains form an alternating ring which encloses part of the gamma chain. F(1) is attached to F(0) by a central stalk formed by the gamma and epsilon chains, while a peripheral stalk is formed by the delta and b chains.

It localises to the cell membrane. In terms of biological role, f(1)F(0) ATP synthase produces ATP from ADP in the presence of a proton or sodium gradient. F-type ATPases consist of two structural domains, F(1) containing the extramembraneous catalytic core and F(0) containing the membrane proton channel, linked together by a central stalk and a peripheral stalk. During catalysis, ATP synthesis in the catalytic domain of F(1) is coupled via a rotary mechanism of the central stalk subunits to proton translocation. Its function is as follows. Key component of the F(0) channel; it plays a direct role in translocation across the membrane. A homomeric c-ring of between 10-14 subunits forms the central stalk rotor element with the F(1) delta and epsilon subunits. In Mycoplasma mobile (strain ATCC 43663 / 163K / NCTC 11711) (Mesomycoplasma mobile), this protein is ATP synthase subunit c.